The following is a 2465-amino-acid chain: Serine/threonine-protein kinase TOR (2465 aa).

11 HEAT repeats span residues 184–221 (VHVP…VIEK), 271–308 (SRYR…FLRD), 348–389 (AELV…AMGP), 549–587 (RLVE…FDDF), 588–625 (LAQA…KNPA), 717–755 (QYLP…STGY), 761–799 (NEYP…LDPH), 888–926 (PYLP…IVRQ), 981–1018 (MYIL…VFGG), 1022–1059 (EHMH…TVQV), and 1061–1098 (THVS…ALGE). Residues 1158-1191 (DFGGVPSEEADETQRQPRSHQVNDVRLRSAGEAS) form a disordered region. One can recognise an FAT domain in the interval 1297–1877 (LLGALAEKCR…MYPLLVACKS (581 aa)). The 319-residue stretch at 2051–2369 (FVPQLIVITS…PPRGAREREL (319 aa)) folds into the PI3K/PI4K catalytic domain. The G-loop stretch occupies residues 2057 to 2063 (VITSKQR). Residues 2230–2238 (GLGDRHPSN) form a catalytic loop region. The tract at residues 2250–2275 (HIDFGDCFEASMNREKFPEKVPFRLT) is activation loop. A disordered region spans residues 2401-2431 (RDFSSGSSLSGAGSSTQHGNEHLASGDTREV). Positions 2404 to 2415 (SSGSSLSGAGSS) are enriched in low complexity. One can recognise an FATC domain in the interval 2433 to 2465 (PGLSVKVQVQRLILQATSHENLCQNYVGWCPFW).

It belongs to the PI3/PI4-kinase family. The target of rapamycin complex 1 (TORC1) is composed of at least RAPTOR, LST8 and TOR.

The catalysed reaction is L-seryl-[protein] + ATP = O-phospho-L-seryl-[protein] + ADP + H(+). The enzyme catalyses L-threonyl-[protein] + ATP = O-phospho-L-threonyl-[protein] + ADP + H(+). Its activity is regulated as follows. Insensitive to inhibition by rapamycin. Its function is as follows. Component of TORC1 complex, which is an essential cell growth regulator that controls plant development. Acts through the phosphorylation of downstream effectors that are recruited by the binding partner RAPTOR. Acts by activating transcription, protein synthesis and ribosome biogenesis, and inhibiting mRNA degradation and autophagy. This Oryza sativa subsp. japonica (Rice) protein is Serine/threonine-protein kinase TOR.